A 238-amino-acid chain; its full sequence is LexA repressor (238 aa).

A DNA-binding region (H-T-H motif) is located at residues phenylalanine 26 to threonine 46. Active-site for autocatalytic cleavage activity residues include serine 158 and lysine 196.

Belongs to the peptidase S24 family. In terms of assembly, homodimer.

It catalyses the reaction Hydrolysis of Ala-|-Gly bond in repressor LexA.. Its function is as follows. Represses a number of genes involved in the response to DNA damage (SOS response), including recA and lexA. In the presence of single-stranded DNA, RecA interacts with LexA causing an autocatalytic cleavage which disrupts the DNA-binding part of LexA, leading to derepression of the SOS regulon and eventually DNA repair. The chain is LexA repressor from Rhizobium meliloti (strain 1021) (Ensifer meliloti).